Consider the following 628-residue polypeptide: Vacuolar-sorting receptor 3 (628 aa).

Positions M1–A24 are cleaved as a signal peptide. Over R25 to A569 the chain is Lumenal. In terms of domain architecture, PA spans Q56 to I168. 3 N-linked (GlcNAc...) asparagine glycosylation sites follow: N148, N294, and N434. EGF-like domains lie at E416–E466 and G469–E516. Disulfide bonds link C420/C438, C427/C447, C449/C465, C473/C493, C480/C501, C503/C515, and C545/C558. Residues D517–I559 enclose the EGF-like 3; calcium-binding domain. Residues W570–V590 traverse the membrane as a helical segment. At Y591–A628 the chain is on the cytoplasmic side. Positions Y610–L613 match the Tyrosine-based internalization motif motif.

It belongs to the VSR (BP-80) family. In terms of tissue distribution, expressed in seeds, seedlings, roots, leaves, flowers and siliques.

The protein localises to the membrane. The protein resides in the golgi apparatus membrane. It localises to the cytoplasmic vesicle. It is found in the clathrin-coated vesicle membrane. Its subcellular location is the prevacuolar compartment membrane. Its function is as follows. Vacuolar-sorting receptor (VSR) involved in clathrin-coated vesicles sorting from Golgi apparatus to vacuoles. The sequence is that of Vacuolar-sorting receptor 3 (VSR3) from Arabidopsis thaliana (Mouse-ear cress).